The chain runs to 144 residues: Complexin-1 (144 aa).

The segment covering 1-10 (MVSFLGGGLL) has biased composition (gly residues). The tract at residues 1 to 119 (MVSFLGGGLL…SGFPKNLDDL (119 aa)) is disordered. 2 stretches are compositionally biased toward basic and acidic residues: residues 18–27 (LEEKEDKKEG) and 36–86 (AEAK…EGRL). The stretch at 29-67 (EEEDPEIAEAKREAEEKRNEKYRKMEEEREVMRQGIRDK) forms a coiled coil. Positions 103 to 112 (LQSSAQSSGF) are enriched in polar residues. Position 141 is a cysteine methyl ester (C141). C141 carries the S-farnesyl cysteine lipid modification. Residues 142 to 144 (NLQ) constitute a propeptide, removed in mature form.

It belongs to the complexin/synaphin family. As to quaternary structure, binds to the SNARE core complex containing SNAP25, synaptobrevin and syntaxin-1. As to expression, expressed in a subset of neurons in the central nervous system, including large serotoninergic Retzius neurons and pressure-sensitive P cells.

Its subcellular location is the membrane. Positively regulates a late step in synaptic vesicle exocytosis. The chain is Complexin-1 (cpx1) from Hirudo medicinalis (Medicinal leech).